We begin with the raw amino-acid sequence, 420 residues long: UDP-glucuronic acid decarboxylase 1 (420 aa).

Met-1 is modified (N-acetylmethionine). Residues Met-1–Lys-19 lie on the Cytoplasmic side of the membrane. Residues Leu-20–Met-40 traverse the membrane as a helical; Signal-anchor for type II membrane protein segment. Residues Arg-41–Ser-420 are Lumenal-facing. Thr-94 is subject to Phosphothreonine. Residues Gly-98, Phe-99, Val-100, Asp-119, Asn-120, Phe-122, Thr-123, Gly-124, Asp-144, and Val-145 each contribute to the NAD(+) site. UDP-alpha-D-glucuronate is bound by residues Leu-149 and Tyr-150. Residues Leu-159 and Ser-161 each contribute to the NAD(+) site. A UDP-alpha-D-glucuronate-binding site is contributed by Lys-177. Thr-178 is an NAD(+) binding site. Asn-185, Gly-188, Lys-191, and Arg-192 together coordinate UDP-alpha-D-glucuronate. NAD(+) is bound by residues Ala-200, Tyr-231, and Lys-235. Tyr-231 acts as the Proton acceptor in catalysis. The UDP-alpha-D-glucuronate site is built by Tyr-245, Gln-248, and Glu-249. Thr-261, His-267, and Arg-272 together coordinate NAD(+). Asn-316 is a glycosylation site (N-linked (GlcNAc...) asparagine).

The protein belongs to the NAD(P)-dependent epimerase/dehydratase family. UDP-glucuronic acid decarboxylase subfamily. As to quaternary structure, homodimer and homotetramer. Interacts with AKT1. Requires NAD(+) as cofactor.

The protein localises to the golgi apparatus. Its subcellular location is the golgi stack membrane. The catalysed reaction is UDP-alpha-D-glucuronate + H(+) = UDP-alpha-D-xylose + CO2. Its pathway is nucleotide-sugar biosynthesis; UDP-alpha-D-xylose biosynthesis; UDP-alpha-D-xylose from UDP-alpha-D-glucuronate: step 1/1. Functionally, catalyzes the NAD-dependent decarboxylation of UDP-glucuronic acid to UDP-xylose. Necessary for the biosynthesis of the core tetrasaccharide in glycosaminoglycan biosynthesis. The sequence is that of UDP-glucuronic acid decarboxylase 1 from Homo sapiens (Human).